We begin with the raw amino-acid sequence, 208 residues long: Uracil phosphoribosyltransferase (208 aa).

5-phospho-alpha-D-ribose 1-diphosphate contacts are provided by residues Arg78, Arg103, and Asp130–Ser138. Residues Ile193 and Gly198 to Ala200 each bind uracil. A 5-phospho-alpha-D-ribose 1-diphosphate-binding site is contributed by Asp199.

It belongs to the UPRTase family. It depends on Mg(2+) as a cofactor.

The catalysed reaction is UMP + diphosphate = 5-phospho-alpha-D-ribose 1-diphosphate + uracil. Its pathway is pyrimidine metabolism; UMP biosynthesis via salvage pathway; UMP from uracil: step 1/1. Allosterically activated by GTP. In terms of biological role, catalyzes the conversion of uracil and 5-phospho-alpha-D-ribose 1-diphosphate (PRPP) to UMP and diphosphate. This is Uracil phosphoribosyltransferase from Enterobacter sp. (strain 638).